Consider the following 95-residue polypeptide: Translation initiation factor IF-1 (95 aa).

One can recognise an S1-like domain in the interval 1–72; it reads MAKEELIEMD…TKARITYRHK (72 aa). Positions 70-95 are disordered; sequence RHKVGGPPGPVTGGGNRPPPRQPRRR. Positions 86-95 are enriched in pro residues; sequence RPPPRQPRRR.

Belongs to the IF-1 family. As to quaternary structure, component of the 30S ribosomal translation pre-initiation complex which assembles on the 30S ribosome in the order IF-2 and IF-3, IF-1 and N-formylmethionyl-tRNA(fMet); mRNA recruitment can occur at any time during PIC assembly.

The protein localises to the cytoplasm. In terms of biological role, one of the essential components for the initiation of protein synthesis. Stabilizes the binding of IF-2 and IF-3 on the 30S subunit to which N-formylmethionyl-tRNA(fMet) subsequently binds. Helps modulate mRNA selection, yielding the 30S pre-initiation complex (PIC). Upon addition of the 50S ribosomal subunit IF-1, IF-2 and IF-3 are released leaving the mature 70S translation initiation complex. In Rhodospirillum rubrum (strain ATCC 11170 / ATH 1.1.1 / DSM 467 / LMG 4362 / NCIMB 8255 / S1), this protein is Translation initiation factor IF-1.